We begin with the raw amino-acid sequence, 433 residues long: Histidinol dehydrogenase homolog (433 aa).

The Zn(2+) site is built by Gln-249 and His-252. Residues Glu-319 and His-320 each act as proton acceptor in the active site. Zn(2+) is bound by residues Asp-353 and His-412.

This sequence belongs to the histidinol dehydrogenase family. Zn(2+) serves as cofactor.

This chain is Histidinol dehydrogenase homolog, found in Ruegeria pomeroyi (strain ATCC 700808 / DSM 15171 / DSS-3) (Silicibacter pomeroyi).